The primary structure comprises 829 residues: FAST kinase domain-containing protein 1, mitochondrial (829 aa).

At lysine 346 the chain carries N6-acetyllysine. The RAP domain occupies 761–821 (IAIELLDVRA…KDARMDYLRE (61 aa)).

It belongs to the FAST kinase family. In terms of tissue distribution, expression detected in spleen, testis, colon, heart, smooth muscle, kidney, brain, lung, liver, brown and white adipose tissue with highest expression in heart and brown adipose tissue.

It localises to the mitochondrion. Its function is as follows. Involved in the down-regulation of mitochondrial MT-ND3 mRNA levels which leads to decreased respiratory complex I abundance and activity. This Mus musculus (Mouse) protein is FAST kinase domain-containing protein 1, mitochondrial (Fastkd1).